We begin with the raw amino-acid sequence, 87 residues long: Small ribosomal subunit protein bS20 (87 aa).

This sequence belongs to the bacterial ribosomal protein bS20 family.

Binds directly to 16S ribosomal RNA. The protein is Small ribosomal subunit protein bS20 of Roseobacter denitrificans (strain ATCC 33942 / OCh 114) (Erythrobacter sp. (strain OCh 114)).